The primary structure comprises 284 residues: tRNA pseudouridine synthase A (284 aa).

Asp52 (nucleophile) is an active-site residue. Tyr149 is a binding site for substrate.

It belongs to the tRNA pseudouridine synthase TruA family. Homodimer.

The catalysed reaction is uridine(38/39/40) in tRNA = pseudouridine(38/39/40) in tRNA. Formation of pseudouridine at positions 38, 39 and 40 in the anticodon stem and loop of transfer RNAs. The polypeptide is tRNA pseudouridine synthase A (Orientia tsutsugamushi (strain Boryong) (Rickettsia tsutsugamushi)).